Here is a 96-residue protein sequence, read N- to C-terminus: Conantokin Rl-C (96 aa).

Residues M1–G21 form the signal peptide. Residues T22–R78 constitute a propeptide that is removed on maturation. The segment at S36–E85 is disordered. The segment covering S56–M66 has biased composition (basic and acidic residues). Residue E81 participates in a divalent metal cation binding. Residues E81, E82, E85, E89, and E93 each carry the 4-carboxyglutamate modification. Positions 85, 89, and 93 each coordinate a divalent metal cation. N96 is modified (asparagine amide).

Belongs to the conotoxin B superfamily. It depends on Ca(2+) as a cofactor. Mg(2+) serves as cofactor. As to expression, expressed by the venom duct.

Its subcellular location is the secreted. Functionally, conantokins inhibit N-methyl-D-aspartate (NMDA) receptors. This toxin has antagonist activity on NR2B/GRIN2B (IC(50)=1.4 uM) and NR2A/GRIN2A (IC(50)=2.9 uM) subunits, when tested on rat receptors. The chain is Conantokin Rl-C from Conus rolani (Cone snail).